The following is a 443-amino-acid chain: METLASLYNEHLSTLQQRTRDVLERHQLDALLIHSGELQRLFLDDRDYPFKVNPQFKAWVPVTEVPNCWLWVDGVNTPKLWFYSPVDYWHSVEPLPDSFWTKNIDVQPLLNADDIAQQLPVQRERVAYIGYAQQRAQALGFSAENINPQPVLDYLHYYRSYKTDYELACMREAQKTAVVGHRAAYEAFQSGMSEFDINLAYLMATGHRDTDVPYDNIVALNEHSAVLHYTILQHQPPAEIRSFLIDAGAEYNGYAADLTRTYAADRDSDFAALISDLNTEQLALIDTIKSGERYTDYHVQMHQRIAKLLRTHNLVTGISEEAMVEQGITCPFLPHGLGHPLGLQVHDTAGFMQDDKGTNLNAPSKYPYLRCTRVLQPRMVLTIEPGLYFIDSLLAPWRIGEFSKHFNWDRIDALKPYGGIRIEDNIVIHDKRVENMTRDLKLA.

Mn(2+) contacts are provided by Asp246, Asp257, His339, Glu384, and Glu423.

This sequence belongs to the peptidase M24B family. Bacterial-type prolidase subfamily. Mn(2+) serves as cofactor.

It carries out the reaction Xaa-L-Pro dipeptide + H2O = an L-alpha-amino acid + L-proline. Its function is as follows. Splits dipeptides with a prolyl residue in the C-terminal position. This Yersinia pseudotuberculosis serotype I (strain IP32953) protein is Xaa-Pro dipeptidase.